Here is a 512-residue protein sequence, read N- to C-terminus: Ankyrin repeat domain-containing protein SOWAHC (512 aa).

Phosphoserine is present on residues S82 and S125. The interval 126 to 248 (LGLGGEVSDQ…AEEESSVGAS (123 aa)) is disordered. Residues 173 to 186 (PPQGEAEGGSSPSG) show a composition bias toward low complexity. Residue S205 is modified to Phosphoserine. The span at 214–228 (PGDGNAGGRSRGGGD) shows a compositional bias: gly residues. Over residues 229–248 (SDTASLASSSAEEESSVGAS) the composition is skewed to low complexity. ANK repeat units follow at residues 288 to 317 (TGFTCLHWAAKHGRQELLAMLVNFATKHQL) and 327 to 357 (GGYTALHLAAMHGHVEVVKLLVGAYDADVDI). Omega-N-methylarginine is present on R395. The disordered stretch occupies residues 427-500 (HVPEGWTGGS…EERSLRGYSS (74 aa)). The segment covering 453-462 (MKPRLNKIRF) has biased composition (basic residues). Positions 481–492 (EEGEEEEEEEEE) are enriched in acidic residues.

The protein belongs to the SOWAH family.

This chain is Ankyrin repeat domain-containing protein SOWAHC (Sowahc), found in Mus musculus (Mouse).